The primary structure comprises 254 residues: Imidazole glycerol phosphate synthase subunit HisF (254 aa).

Active-site residues include aspartate 12 and aspartate 131.

It belongs to the HisA/HisF family. Heterodimer of HisH and HisF.

The protein localises to the cytoplasm. The catalysed reaction is 5-[(5-phospho-1-deoxy-D-ribulos-1-ylimino)methylamino]-1-(5-phospho-beta-D-ribosyl)imidazole-4-carboxamide + L-glutamine = D-erythro-1-(imidazol-4-yl)glycerol 3-phosphate + 5-amino-1-(5-phospho-beta-D-ribosyl)imidazole-4-carboxamide + L-glutamate + H(+). The protein operates within amino-acid biosynthesis; L-histidine biosynthesis; L-histidine from 5-phospho-alpha-D-ribose 1-diphosphate: step 5/9. IGPS catalyzes the conversion of PRFAR and glutamine to IGP, AICAR and glutamate. The HisF subunit catalyzes the cyclization activity that produces IGP and AICAR from PRFAR using the ammonia provided by the HisH subunit. The polypeptide is Imidazole glycerol phosphate synthase subunit HisF (Rhizorhabdus wittichii (strain DSM 6014 / CCUG 31198 / JCM 15750 / NBRC 105917 / EY 4224 / RW1) (Sphingomonas wittichii)).